The sequence spans 279 residues: Protein K1 (279 aa).

Residues 1-18 (MFLYVVCSLAVCFRGLLS) form the signal peptide. Topologically, residues 19–220 (LSLQSSPNLC…TYLYIQEHLL (202 aa)) are extracellular. The chain crosses the membrane as a helical span at residues 221–241 (VFMTLVALIGTMCGILGTIIF). Residues 242–279 (AHCQKQRDSNKTVPQQLQDYYSLHDLCTEDYTQPVDWY) lie on the Cytoplasmic side of the membrane.

Homooligomer.

The protein resides in the host membrane. In terms of biological role, promotes host cell survival pathways and may contribute to pathogenesis by preventing infected cells from undergoing apoptosis. Acts in host B-cells by mimicking the activated B-cell receptor complex. The cytoplasmic tail of K1 can induce the phosphorylation of a number of different kinases, leading to the activation of survival signaling pathways. In Human herpesvirus 8 type P (isolate GK18) (HHV-8), this protein is Protein K1 (K1).